Consider the following 263-residue polypeptide: Microtubule-associated protein RP/EB family member 1 (263 aa).

Positions 14–116 constitute a Calponin-homology (CH) domain; the sequence is NLSRHDMLAW…FVQWFKKFFD (103 aa). An EB1 C-terminal domain is found at 180 to 250; sequence KKAAGDDESA…LYATDEGFVI (71 aa).

This sequence belongs to the MAPRE family.

The protein resides in the cytoplasm. Its subcellular location is the cytoskeleton. It localises to the microtubule organizing center. The protein localises to the centrosome. It is found in the golgi apparatus. The protein resides in the spindle. Its subcellular location is the spindle pole. In terms of biological role, plus-end tracking protein (+TIP) that binds to the plus-end of microtubules and regulates the dynamics of the microtubule cytoskeleton. Promotes cytoplasmic microtubule nucleation and elongation. Involved in mitotic spindle positioning by stabilizing microtubules and promoting dynamic connection between astral microtubules and the cortex during mitotic chromosome segregation. This is Microtubule-associated protein RP/EB family member 1 (MAPRE1) from Coturnix coturnix (Common quail).